The chain runs to 292 residues: Nitrogenase iron protein (292 aa).

Residue 10-17 (GKGGIGKS) coordinates ATP. A [4Fe-4S] cluster-binding site is contributed by cysteine 98. ADP-ribosylarginine; by dinitrogenase reductase ADP-ribosyltransferase is present on arginine 101. Cysteine 133 contacts [4Fe-4S] cluster.

This sequence belongs to the NifH/BchL/ChlL family. Homodimer. [4Fe-4S] cluster is required as a cofactor. The reversible ADP-ribosylation of Arg-101 inactivates the nitrogenase reductase and regulates nitrogenase activity.

It catalyses the reaction N2 + 8 reduced [2Fe-2S]-[ferredoxin] + 16 ATP + 16 H2O = H2 + 8 oxidized [2Fe-2S]-[ferredoxin] + 2 NH4(+) + 16 ADP + 16 phosphate + 6 H(+). In terms of biological role, the key enzymatic reactions in nitrogen fixation are catalyzed by the nitrogenase complex, which has 2 components: the iron protein and the molybdenum-iron protein. The chain is Nitrogenase iron protein from Teredinibacter turnerae (strain ATCC 39867 / T7901).